The following is a 1357-amino-acid chain: Vascular endothelial growth factor receptor 3 (1357 aa).

Positions 1–24 (MKRDFTFFCRIWIGIPFFSGLVNG) are cleaved as a signal peptide. Ig-like C2-type domains are found at residues 25–121 (FSMS…YYRC), 138–244 (IFVF…VQVI), 255–343 (PEDS…RELT), 352–442 (PFIS…LNFT), 453–583 (EKEA…TTIP), 583–690 (PEGF…HRKY), and 699–785 (PRYR…ATVS). The Extracellular segment spans residues 25 to 796 (FSMSPPTLDN…IGSDDKTNVE (772 aa)). 5 N-linked (GlcNAc...) asparagine glycosylation sites follow: N44, N48, N114, N216, and N271. 2 disulfides stabilise this stretch: C51/C121 and C173/C225. A disulfide bond links C272 and C331. N-linked (GlcNAc...) asparagine glycosylation is found at N360, N400, and N440. 3 cysteine pairs are disulfide-bonded: C473–C562, C493–C514, and C606–C674. N553, N610, N660, N707, N711, and N751 each carry an N-linked (GlcNAc...) asparagine glycan. A disulfide bridge links C720 with C772. A helical transmembrane segment spans residues 797–817 (IVILIGTGVIAIFFWVLLLVI). Over 818–1357 (FCNVKRVNPA…DYFSSSDQAV (540 aa)) the chain is Cytoplasmic. One can recognise a Protein kinase domain in the interval 866–1181 (LRLGKVLGHG…ALVEILGDLL (316 aa)). ATP contacts are provided by residues 872 to 880 (LGHGAFGKV) and K900. The segment at 978–1007 (QSQVRRMIEAGQASQSEHQPSTSSTNPPRV) is disordered. Residues 989–1005 (QASQSEHQPSTSSTNPP) show a composition bias toward polar residues. The active-site Proton acceptor is the D1045. Phosphotyrosine; by autocatalysis occurs at positions 1071 and 1076. The tract at residues 1192–1212 (NVSQSSEDDGFSQASSRPPSQ) is disordered. Y1226, Y1227, Y1334, and Y1338 each carry phosphotyrosine; by autocatalysis.

This sequence belongs to the protein kinase superfamily. Tyr protein kinase family. CSF-1/PDGF receptor subfamily. In terms of assembly, interacts with vegfc and vegfd. Monomer in the absence of bound vegfc or vegfd. Homodimer in the presence of bound vegfc or vegfd. In terms of processing, autophosphorylated on tyrosine residues upon ligand binding. Autophosphorylation occurs in trans, i.e. one subunit of the dimeric receptor phosphorylates tyrosine residues on the other subunit.

Its subcellular location is the cell membrane. It is found in the cytoplasm. The protein localises to the nucleus. The catalysed reaction is L-tyrosyl-[protein] + ATP = O-phospho-L-tyrosyl-[protein] + ADP + H(+). Present in an inactive conformation in the absence of bound ligand. Binding of vegfc or vegfd leads to dimerization and activation by autophosphorylation on tyrosine residues. Tyrosine-protein kinase that acts as a cell-surface receptor for vegf or vegfc. Combinations of multiple VEGF receptors are required for development of different blood vessel types in the embryo. Involved in angiogenesis, specifically in VEGF-induced sprouting of new blood vessels, but not required for proper vasculogenesis or hematopoiesis. This Danio rerio (Zebrafish) protein is Vascular endothelial growth factor receptor 3 (flt4).